A 484-amino-acid polypeptide reads, in one-letter code: MLLADLSSATYTTSSPRLLSKYSAAADLVLRVFDLTMVVASGLIAYRIVFGTWVPAAPYRVAIATTLLYSVICFALFPLYRSWRGRGLLSELVVLGGAFGGVFALFAVHALIVQVGEQVSRGWVGLWFVGGLVSLVAARTLLRGFLNHLRTQGVDVQRVVVVGLRHPVMKISHYLSRNPWVGMNMVGYFRTPYDLAVAEQRQGLPCLGDPDELIEYLKNNQVEQVWISLPLGERDHIKQLLQRLDRYPINVKLVPDLFDFGLLNQSAEQIGSVPVINLRQGGVDRDNYFVVAKALQDKILAVIALMGLWPLMLAIAVGVKMSSPGPVFFRQRRHGLGGREFYMFKFRSMRVHDDHGTTIQQATKNDTRITRFGSFLRRSSLDELPQIFNVLGGSMSIVGPRPHAAQHNTHYEKLINHYMQRHYVKPGITGWAQVNGFRGETPELRTMKKRIQYDLDYIRRWSLWLDIRIIVLTAVRVLGQKTAY.

Transmembrane regions (helical) follow at residues 37-57 (MVVA…VPAA), 59-79 (YRVA…LFPL), 93-113 (VVLG…ALIV), 122-142 (GWVG…RTLL), and 299-319 (ILAV…AVGV).

The protein belongs to the bacterial sugar transferase family.

It localises to the cell inner membrane. The catalysed reaction is di-trans,octa-cis-undecaprenyl phosphate + UDP-alpha-D-glucose = alpha-D-glucosyl di-trans,octa-cis-undecaprenyl diphosphate + UMP. Its pathway is glycan biosynthesis; xanthan biosynthesis. In terms of biological role, is the initiating enzyme for the synthesis of the exopolysaccharide xanthan. Catalyzes the transfer of the glucose-1-phosphate moiety from UDP-Glc onto the carrier lipid undecaprenyl phosphate (C55-P), forming a phosphoanhydride bond yielding to glucosyl-pyrophosphoryl-undecaprenol (Glc-PP-C55). The polypeptide is UDP-glucose:undecaprenyl-phosphate glucose-1-phosphate transferase (gumD) (Xanthomonas campestris pv. campestris).